Reading from the N-terminus, the 72-residue chain is Translation initiation factor IF-1 (72 aa).

An S1-like domain is found at 1-72 (MAKDGVIEVE…NRGRITYRYK (72 aa)).

The protein belongs to the IF-1 family. Component of the 30S ribosomal translation pre-initiation complex which assembles on the 30S ribosome in the order IF-2 and IF-3, IF-1 and N-formylmethionyl-tRNA(fMet); mRNA recruitment can occur at any time during PIC assembly.

It is found in the cytoplasm. In terms of biological role, one of the essential components for the initiation of protein synthesis. Stabilizes the binding of IF-2 and IF-3 on the 30S subunit to which N-formylmethionyl-tRNA(fMet) subsequently binds. Helps modulate mRNA selection, yielding the 30S pre-initiation complex (PIC). Upon addition of the 50S ribosomal subunit IF-1, IF-2 and IF-3 are released leaving the mature 70S translation initiation complex. The polypeptide is Translation initiation factor IF-1 (Bifidobacterium adolescentis (strain ATCC 15703 / DSM 20083 / NCTC 11814 / E194a)).